The chain runs to 578 residues: ER degradation-enhancing alpha-mannosidase-like protein 2 (578 aa).

Residues 1–21 (MPFRLLIPLGLLCALLPQHHG) form the signal peptide. N-linked (GlcNAc...) asparagine glycans are attached at residues N90, N112, N289, and N450. The tract at residues 517–557 (KNTVSSGPWEPPARPGTLFSPENHDQARERKPAKQKVPLLS) is disordered. The segment covering 538–548 (ENHDQARERKP) has biased composition (basic and acidic residues).

The protein belongs to the glycosyl hydrolase 47 family. N-glycosylated. Expressed ubiquitously in all tissues tested with slightly higher levels detected in small intestine and peripheral blood leukocytes and weakest levels in brain and skeletal muscle.

The protein resides in the endoplasmic reticulum lumen. Involved in the endoplasmic reticulum-associated degradation (ERAD) pathway that targets misfolded glycoproteins for degradation in an N-glycan-dependent manner. May initiate ERAD by promoting the first mannose trimming step of ERAD substrates, from Man9GlcNAc2 to Man8GlcNAc2. Seems to recognize and bind to exposed hydrophobic regions in target proteins. The sequence is that of ER degradation-enhancing alpha-mannosidase-like protein 2 (EDEM2) from Homo sapiens (Human).